The primary structure comprises 621 residues: Glutathione-regulated potassium-efflux system protein KefC (621 aa).

12 helical membrane passes run 4-24 (HTLI…PIAV), 26-46 (LGLG…PWGL), 54-74 (AILH…GLEL), 90-110 (GALQ…LLGL), 114-134 (VAEL…MQAM), 149-169 (FAVL…IPLL), 178-198 (LVAF…VVAL), 218-238 (VFSA…EEVG), 270-290 (GLLL…GTLV), 294-314 (LRIV…LWLI), 326-346 (RWFA…FGAA), and 359-379 (ALTL…VLLT). One can recognise an RCK N-terminal domain in the interval 399–518 (QPRVIVAGFG…AGVEAPERET (120 aa)). Positions 598–621 (GWQGTEEGRHTGDIADEPENKPSA) are disordered.

The protein belongs to the monovalent cation:proton antiporter 2 (CPA2) transporter (TC 2.A.37) family. KefC subfamily. In terms of assembly, homodimer. Interacts with the regulatory subunit KefF.

It is found in the cell inner membrane. Its function is as follows. Pore-forming subunit of a potassium efflux system that confers protection against electrophiles. Catalyzes K(+)/H(+) antiport. In Klebsiella pneumoniae (strain 342), this protein is Glutathione-regulated potassium-efflux system protein KefC.